The following is a 230-amino-acid chain: uncharacterized protein (230 aa).

A run of 7 helical transmembrane segments spans residues 34 to 54, 56 to 76, 87 to 107, 111 to 131, 146 to 166, 167 to 187, and 205 to 225; these read FFAG…MNFQ, VVQY…GLMF, MLFA…GMVI, GLGA…LMSV, MLFI…FLGS, PMFQ…YIAY, and VSLY…IGIF.

Belongs to the BI1 family.

It is found in the cell membrane. This is an uncharacterized protein from Helicobacter pylori (strain ATCC 700392 / 26695) (Campylobacter pylori).